Reading from the N-terminus, the 862-residue chain is DNA topoisomerase 3-beta-1 (862 aa).

Residues 3–153 enclose the Toprim domain; sequence TVLMVAEKPS…EKTVFRARFS (151 aa). The region spanning 171–593 is the Topo IA-type catalytic domain; the sequence is DHNEALSVDA…HTLDIFKRKF (423 aa). The active-site O-(5'-phospho-DNA)-tyrosine intermediate is Y336. The segment at 820–855 is disordered; the sequence is HPMHRGGPGRRQGRGRGRGRRPPGKPNPRRPKDKMS. Positions 821 to 851 are enriched in basic residues; that stretch reads PMHRGGPGRRQGRGRGRGRRPPGKPNPRRPK.

It belongs to the type IA topoisomerase family. In terms of tissue distribution, highly expressed in testis.

It catalyses the reaction ATP-independent breakage of single-stranded DNA, followed by passage and rejoining.. In terms of biological role, releases the supercoiling and torsional tension of DNA introduced during the DNA replication and transcription by transiently cleaving and rejoining one strand of the DNA duplex. Introduces a single-strand break via transesterification at a target site in duplex DNA. The scissile phosphodiester is attacked by the catalytic tyrosine of the enzyme, resulting in the formation of a DNA-(5'-phosphotyrosyl)-enzyme intermediate and the expulsion of a 3'-OH DNA strand. The free DNA strand than undergoes passage around the unbroken strand thus removing DNA supercoils. Finally, in the religation step, the DNA 3'-OH attacks the covalent intermediate to expel the active-site tyrosine and restore the DNA phosphodiester backbone. Possesses negatively supercoiled DNA relaxing activity. In Mus musculus (Mouse), this protein is DNA topoisomerase 3-beta-1 (Top3b).